The following is a 523-amino-acid chain: Transcription initiation factor TFIID subunit 4 (523 aa).

2 disordered regions span residues 1–100 and 185–241; these read MSLP…AASD and ASVE…VQGG. The segment covering 58-77 has biased composition (low complexity); it reads QMQPPRQPIQQQMQHFQSPS. Over residues 78–87 the composition is skewed to pro residues; that stretch reads PMAPQGPPGT. Positions 101-199 constitute a TAFH domain; sequence DKNVTKCVRF…VNPPPGYVFN (99 aa). A compositionally biased stretch (pro residues) spans 204-213; it reads PGPPQPPPPQ. Over residues 214–236 the composition is skewed to low complexity; sequence QQSQQQPPLEMRQIPNPNQIPPQ. A histone-fold region spans residues 329-383; sequence LKPDEVLNRITKRMMSSCSVEEEALVAISDAVESHLRELITLMAGVAEHRVESLR. A necessary and sufficient for interaction with oma-1 region spans residues 333-382; the sequence is EVLNRITKRMMSSCSVEEEALVAISDAVESHLRELITLMAGVAEHRVESL. A disordered region spans residues 407-435; sequence QEEELRESREKESLIRMSKNKNSGKETIE.

The protein belongs to the TAF4 family. As to quaternary structure, component of the TFIID basal transcription factor complex, composed of TATA-box-binding protein tbp-1, and a number of TBP-associated factors (TAFs). Interacts (via histone-fold domain) with oma-1 (via histone-fold domain). May also interact with oma-2. Interacts (via histone-fold domain) with taf-12 (via the histone-fold domain).

It localises to the nucleus. The protein localises to the cytoplasm. The TFIID basal transcription factor complex plays a major role in the initiation of RNA polymerase II (Pol II)-dependent transcription. TFIID recognizes and binds promoters via its subunit tbp-1, a TATA-box-binding protein, and promotes assembly of the pre-initiation complex (PIC). The TFIID complex consists of tbp-1 and TBP-associated factors (TAFs), including taf-4. Essential for early embryonic development, probably acting via activating transcription initiation by RNA polymerase II, as part of the TFIID complex. In early embryos, but not oocytes, remains, presumably inactive, in the cytoplasm as a result of binding to oma-1. Upon degradation of oma-1, taf-4 is released and bound by taf-12, and the taf-4/12 heterodimer translocates to the nucleus and transcriptional repression is relieved. Involved in lifespan extension in a manner dependent upon mitochondrial function. Plays a role in modulating polyribosome formation. The protein is Transcription initiation factor TFIID subunit 4 of Caenorhabditis elegans.